A 251-amino-acid chain; its full sequence is Electron transfer flavoprotein subunit beta, mitochondrial (251 aa).

The protein belongs to the ETF beta-subunit/FixA family. As to quaternary structure, heterodimer of an alpha and a beta subunit. The cofactor is FAD. AMP serves as cofactor.

It is found in the mitochondrion matrix. The electron transfer flavoprotein serves as a specific electron acceptor for several dehydrogenases, including five acyl-CoA dehydrogenases, glutaryl-CoA and sarcosine dehydrogenase. It transfers the electrons to the main mitochondrial respiratory chain via ETF-ubiquinone oxidoreductase (ETF dehydrogenase). Involved in leucine catabolism and in phytol degradation. The sequence is that of Electron transfer flavoprotein subunit beta, mitochondrial (ETFB) from Arabidopsis thaliana (Mouse-ear cress).